Here is a 710-residue protein sequence, read N- to C-terminus: Methionine--tRNA ligase (710 aa).

Residues 26-36 carry the 'HIGH' region motif; sequence PYANGQIHIGH. Residues Cys157, Cys160, Cys170, and Cys173 each coordinate Zn(2+). The short motif at 347–351 is the 'KMSKS' region element; the sequence is KMSKS. ATP is bound at residue Lys350. A tRNA-binding domain is found at 604–710; it reads DFAKIDLRIA…SGAKPGMRVK (107 aa).

Belongs to the class-I aminoacyl-tRNA synthetase family. MetG type 1 subfamily. As to quaternary structure, homodimer. Requires Zn(2+) as cofactor.

It is found in the cytoplasm. It catalyses the reaction tRNA(Met) + L-methionine + ATP = L-methionyl-tRNA(Met) + AMP + diphosphate. Is required not only for elongation of protein synthesis but also for the initiation of all mRNA translation through initiator tRNA(fMet) aminoacylation. The protein is Methionine--tRNA ligase of Paraburkholderia xenovorans (strain LB400).